The primary structure comprises 248 residues: Triosephosphate isomerase (248 aa).

Residue 9 to 11 participates in substrate binding; the sequence is NWK. Catalysis depends on histidine 94, which acts as the Electrophile. The active-site Proton acceptor is glutamate 166. Substrate contacts are provided by residues glycine 172, serine 212, and 233–234; that span reads GG.

Belongs to the triosephosphate isomerase family. As to quaternary structure, homodimer.

The protein localises to the cytoplasm. The catalysed reaction is D-glyceraldehyde 3-phosphate = dihydroxyacetone phosphate. It functions in the pathway carbohydrate biosynthesis; gluconeogenesis. It participates in carbohydrate degradation; glycolysis; D-glyceraldehyde 3-phosphate from glycerone phosphate: step 1/1. In terms of biological role, involved in the gluconeogenesis. Catalyzes stereospecifically the conversion of dihydroxyacetone phosphate (DHAP) to D-glyceraldehyde-3-phosphate (G3P). This Alkaliphilus oremlandii (strain OhILAs) (Clostridium oremlandii (strain OhILAs)) protein is Triosephosphate isomerase.